Consider the following 1449-residue polypeptide: uncharacterized protein (1449 aa).

A compositionally biased stretch (basic and acidic residues) spans 1 to 13 (MELRSDASHKENV). 7 disordered regions span residues 1-32 (MELRSDASHKENVSPKPAALPKPEQRRFRRSL), 123-201 (SNLS…LRSW), 258-298 (APQE…RRRR), 315-437 (LSDS…NKAQ), 523-551 (KQVQPHMQAGPGSPPSRRAQGKGLSLGRS), 1257-1278 (DQGPRAHSSPEPRACKAQSKAH), and 1399-1449 (RLAA…QLQL). Positions 123–133 (SNLSINETSSP) are enriched in polar residues. Polar residues-rich tracts occupy residues 315-333 (LSDSWAQSKLMSPETTLGT) and 384-394 (PCSSAFSNTAW). Over residues 400–419 (QKGEEGAPRERVHREEERTA) the composition is skewed to basic and acidic residues. Polar residues predominate over residues 426–437 (VPASSASKNKAQ). Over residues 1258 to 1270 (QGPRAHSSPEPRA) the composition is skewed to basic and acidic residues.

This is an uncharacterized protein from Homo sapiens (Human).